The following is a 116-amino-acid chain: uncharacterized protein (116 aa).

The segment at 64 to 116 (RRFYSGTVNRNARSAGAASRSTSSVKRPLESKKRNARPETEKWCASYSAGNRR) is disordered. Positions 73-87 (RNARSAGAASRSTSS) are enriched in low complexity. Over residues 90 to 105 (RPLESKKRNARPETEK) the composition is skewed to basic and acidic residues.

This is an uncharacterized protein from Saccharomyces cerevisiae (strain ATCC 204508 / S288c) (Baker's yeast).